The sequence spans 374 residues: Protein-glutamate methylesterase/protein-glutamine glutaminase (374 aa).

One can recognise a Response regulatory domain in the interval 4–121 (KVLVVDDSGF…SRNPDKVKQM (118 aa)). A 4-aspartylphosphate modification is found at D55. The tract at residues 144 to 186 (PVAAPVPASSPAPASSFASPAPARPAATARAAAPAASHSPAPK) is disordered. The span at 154 to 183 (PAPASSFASPAPARPAATARAAAPAASHSP) shows a compositional bias: low complexity. The CheB-type methylesterase domain maps to 183-374 (PAPKRKPYKL…IGKHLVEACV (192 aa)). Active-site residues include S198, H225, and D318.

This sequence belongs to the CheB family. In terms of processing, phosphorylated by CheA. Phosphorylation of the N-terminal regulatory domain activates the methylesterase activity.

The protein localises to the cytoplasm. It carries out the reaction [protein]-L-glutamate 5-O-methyl ester + H2O = L-glutamyl-[protein] + methanol + H(+). The catalysed reaction is L-glutaminyl-[protein] + H2O = L-glutamyl-[protein] + NH4(+). Functionally, involved in chemotaxis. Part of a chemotaxis signal transduction system that modulates chemotaxis in response to various stimuli. Catalyzes the demethylation of specific methylglutamate residues introduced into the chemoreceptors (methyl-accepting chemotaxis proteins or MCP) by CheR. Also mediates the irreversible deamidation of specific glutamine residues to glutamic acid. The polypeptide is Protein-glutamate methylesterase/protein-glutamine glutaminase (Pseudomonas putida (Arthrobacter siderocapsulatus)).